The following is a 273-amino-acid chain: Large ribosomal subunit protein uL2 (273 aa).

The segment at 221–273 (RGTAMNPVDHPHGGGEGRNFGKHPVTPWGIQTKGKKTRSNKRTDKFIVRRRSK) is disordered.

It belongs to the universal ribosomal protein uL2 family. As to quaternary structure, part of the 50S ribosomal subunit. Forms a bridge to the 30S subunit in the 70S ribosome.

Its function is as follows. One of the primary rRNA binding proteins. Required for association of the 30S and 50S subunits to form the 70S ribosome, for tRNA binding and peptide bond formation. It has been suggested to have peptidyltransferase activity; this is somewhat controversial. Makes several contacts with the 16S rRNA in the 70S ribosome. In Sodalis glossinidius (strain morsitans), this protein is Large ribosomal subunit protein uL2.